A 521-amino-acid polypeptide reads, in one-letter code: Medium/long-chain-fatty-acid--[acyl-carrier-protein] ligase MbtM (521 aa).

A disordered region spans residues 146-172; the sequence is RRCPEPPAPHANPAILQGTAGSTGTPK.

Belongs to the ATP-dependent AMP-binding enzyme family.

The catalysed reaction is a long-chain fatty acid + holo-[ACP] + ATP = a long-chain fatty acyl-[ACP] + AMP + diphosphate. It catalyses the reaction a medium-chain fatty acid + holo-[ACP] + ATP = a medium-chain fatty acyl-[ACP] + AMP + diphosphate. It functions in the pathway siderophore biosynthesis; mycobactin biosynthesis. Activates lipidic moieties required for mycobactin biosynthesis. Converts medium- to long-chain aliphatic fatty acids into acyl adenylate, which is further transferred on to the phosphopantetheine arm of the carrier protein MbtL. The chain is Medium/long-chain-fatty-acid--[acyl-carrier-protein] ligase MbtM (mbtM) from Mycolicibacterium paratuberculosis (strain ATCC BAA-968 / K-10) (Mycobacterium paratuberculosis).